The primary structure comprises 482 residues: Protein trichome birefringence-like 15 (482 aa).

The helical; Signal-anchor for type II membrane protein transmembrane segment at 109–129 (GSVSLSLIILILLVTTLLVSA) threads the bilayer. The short motif at 217-219 (GDS) is the GDS motif element. Positions 461-475 (DCLHWCLPGIPDTWN) match the DCXHWCLPGXXDXWN motif motif.

This sequence belongs to the PC-esterase family. TBL subfamily.

Its subcellular location is the membrane. In terms of biological role, may act as a bridging protein that binds pectin and other cell wall polysaccharides. Probably involved in maintaining esterification of pectins. May be involved in the specific O-acetylation of cell wall polymers. This Arabidopsis thaliana (Mouse-ear cress) protein is Protein trichome birefringence-like 15 (TBL15).